Consider the following 442-residue polypeptide: MLKDRFIADIIASKESLVGGRVRVCGWAYRIRDLGRLKFILVRDRSGVIQATVKRGESPEDALRAAEDLKLESVVCVEGELRQAPTREGVEVKVERLEVLSTPVEPLPLEVEGSEKASLPTRLKYRWLDIRNPMVSAIFELEAMVAKVFRDYYWSQGFVEIFTPKIVAAGTESGAEVFPVVYFDKTAFLAQSPQFYKQFAVIAGLERVFEIGPVFRAEPHHTSRHLNEYHSLDIEVGFIESYNDVMNYVEGFMRAIVRMLEEDGRRVLELYGVELPRIPASGIPKIPLRKAYEILEEKYGKKVEYGEDLDSEGERLMGAYAGEELDSDFVFIVEYPWKVRPFYTMRKDDEPSWTYSFDLLYRGLEIVTGGQREHRYHRLLENLRDKGLDAESFQFYLDFFKHGAPPHGGAGMGLERIVMQTLKLENIREARMLPRDTERITP.

L-aspartate is bound at residue glutamate 172. The aspartate stretch occupies residues 194-197 (QFYK). Arginine 216 lines the L-aspartate pocket. ATP contacts are provided by residues 216-218 (RAE), 224-226 (RHL), and glutamate 365. Positions 365 and 368 each coordinate Mg(2+). Positions 368 and 372 each coordinate L-aspartate. 413-416 (GLER) contributes to the ATP binding site.

This sequence belongs to the class-II aminoacyl-tRNA synthetase family. Type 2 subfamily. Homodimer. It depends on Mg(2+) as a cofactor.

It is found in the cytoplasm. It catalyses the reaction tRNA(Asx) + L-aspartate + ATP = L-aspartyl-tRNA(Asx) + AMP + diphosphate. Aspartyl-tRNA synthetase with relaxed tRNA specificity since it is able to aspartylate not only its cognate tRNA(Asp) but also tRNA(Asn). Reaction proceeds in two steps: L-aspartate is first activated by ATP to form Asp-AMP and then transferred to the acceptor end of tRNA(Asp/Asn). This Aeropyrum pernix (strain ATCC 700893 / DSM 11879 / JCM 9820 / NBRC 100138 / K1) protein is Aspartate--tRNA(Asp/Asn) ligase (aspS).